The primary structure comprises 418 residues: Trans-acting enoyl reductase (418 aa).

This sequence belongs to the saccharopine dehydrogenase family. Enoyl reductase subfamily.

Its function is as follows. Involved in the reduction of the double bond between C-4 and C-5 during phthiocerol dimycocerosates (DIM A) and glycosylated phenolphthiocerol dimycocerosates (PGL) biosynthesis. The protein is Trans-acting enoyl reductase of Mycobacterium ulcerans (strain Agy99).